A 179-amino-acid chain; its full sequence is UPF0302 protein EF_1554 (179 aa).

This sequence belongs to the UPF0302 family.

This is UPF0302 protein EF_1554 from Enterococcus faecalis (strain ATCC 700802 / V583).